Reading from the N-terminus, the 1393-residue chain is DNA-directed RNA polymerase subunit beta' (1393 aa).

Residues C72, C74, C87, and C90 each coordinate Zn(2+). Positions 463, 465, and 467 each coordinate Mg(2+). The Zn(2+) site is built by C812, C887, C894, and C897.

Belongs to the RNA polymerase beta' chain family. As to quaternary structure, the RNAP catalytic core consists of 2 alpha, 1 beta, 1 beta' and 1 omega subunit. When a sigma factor is associated with the core the holoenzyme is formed, which can initiate transcription. Mg(2+) is required as a cofactor. The cofactor is Zn(2+).

The enzyme catalyses RNA(n) + a ribonucleoside 5'-triphosphate = RNA(n+1) + diphosphate. Functionally, DNA-dependent RNA polymerase catalyzes the transcription of DNA into RNA using the four ribonucleoside triphosphates as substrates. The polypeptide is DNA-directed RNA polymerase subunit beta' (Chlamydia pneumoniae (Chlamydophila pneumoniae)).